A 478-amino-acid polypeptide reads, in one-letter code: Dynein regulatory complex subunit 4 (478 aa).

Positions 1–12 are enriched in basic residues; it reads MAPKKKGKKGKA. The tract at residues 1–29 is disordered; sequence MAPKKKGKKGKAKGTAIVDGVAPEDMTKE. The regulates microtubule-binding stretch occupies residues 1 to 114; the sequence is MAPKKKGKKG…LLYEHQNNLA (114 aa). Coiled coils occupy residues 24–207 and 242–426; these read EDMT…RKTE and LNNL…ELAR. Residues 115 to 258 form a microtubule-binding region; that stretch reads EVKAEGTVVM…NSLKEQMEDM (144 aa). An interaction with SMO region spans residues 357–478; the sequence is QQKTGFKNLL…GPAGLVGAPT (122 aa).

Belongs to the DRC4 family. In terms of assembly, component of the nexin-dynein regulatory complex (N-DRC). Interacts with microtubules. Interacts with SMO. Interacts (via coiled-coil domains) with RAB3B (in GTP-bound form). Interacts with DRC1. Interacts with DRC7. Highly expressed in adult testes and lung. Weakly or not expressed in other tested tissues.

The protein localises to the cytoplasm. It is found in the cytoskeleton. The protein resides in the cell projection. Its subcellular location is the cilium. It localises to the flagellum. The protein localises to the cilium axoneme. It is found in the cilium basal body. The protein resides in the golgi apparatus. Its subcellular location is the flagellum axoneme. Functionally, component of the nexin-dynein regulatory complex (N-DRC), a key regulator of ciliary/flagellar motility which maintains the alignment and integrity of the distal axoneme and regulates microtubule sliding in motile axonemes. Plays an important role in the assembly of the N-DRC linker. Plays dual roles at both the primary (or non-motile) cilia to regulate hedgehog signaling and in motile cilia to coordinate cilia movement. Required for proper motile cilia functioning. Positively regulates ciliary smoothened (SMO)-dependent Hedgehog (Hh) signaling pathway by facilitating the trafficking of SMO into the cilium and the stimulation of SMO activity in a GRK2-dependent manner. May play a role in the spermatozoa motility. This chain is Dynein regulatory complex subunit 4 (Gas8), found in Mus musculus (Mouse).